We begin with the raw amino-acid sequence, 96 residues long: Small ribosomal subunit protein bS21 (96 aa).

Residues arginine 52–alanine 96 form a disordered region. Residues alanine 69–alanine 96 show a composition bias toward low complexity.

It belongs to the bacterial ribosomal protein bS21 family.

In Methylobacterium nodulans (strain LMG 21967 / CNCM I-2342 / ORS 2060), this protein is Small ribosomal subunit protein bS21.